A 102-amino-acid chain; its full sequence is Large ribosomal subunit protein bL21 (102 aa).

This sequence belongs to the bacterial ribosomal protein bL21 family. In terms of assembly, part of the 50S ribosomal subunit. Contacts protein L20.

In terms of biological role, this protein binds to 23S rRNA in the presence of protein L20. This is Large ribosomal subunit protein bL21 from Arthrobacter sp. (strain FB24).